Reading from the N-terminus, the 418-residue chain is Diaminopimelate decarboxylase (418 aa).

N6-(pyridoxal phosphate)lysine is present on Lys53. Pyridoxal 5'-phosphate is bound by residues Gly223 and 264–267 (EPGR). Residues Arg267, Arg303, and Tyr307 each contribute to the substrate site. Cys338 acts as the Proton donor in catalysis. Positions 339 and 374 each coordinate substrate. Tyr374 serves as a coordination point for pyridoxal 5'-phosphate.

The protein belongs to the Orn/Lys/Arg decarboxylase class-II family. LysA subfamily. Homodimer. It depends on pyridoxal 5'-phosphate as a cofactor.

It catalyses the reaction meso-2,6-diaminopimelate + H(+) = L-lysine + CO2. Its pathway is amino-acid biosynthesis; L-lysine biosynthesis via DAP pathway; L-lysine from DL-2,6-diaminopimelate: step 1/1. Specifically catalyzes the decarboxylation of meso-diaminopimelate (meso-DAP) to L-lysine. The chain is Diaminopimelate decarboxylase from Buchnera aphidicola subsp. Baizongia pistaciae (strain Bp).